A 423-amino-acid chain; its full sequence is Histidine--tRNA ligase (423 aa).

This sequence belongs to the class-II aminoacyl-tRNA synthetase family. Homodimer.

It is found in the cytoplasm. The catalysed reaction is tRNA(His) + L-histidine + ATP = L-histidyl-tRNA(His) + AMP + diphosphate + H(+). This is Histidine--tRNA ligase from Actinobacillus succinogenes (strain ATCC 55618 / DSM 22257 / CCUG 43843 / 130Z).